An 82-amino-acid chain; its full sequence is Small ribosomal subunit protein uS17 (82 aa).

This sequence belongs to the universal ribosomal protein uS17 family. In terms of assembly, part of the 30S ribosomal subunit.

Its function is as follows. One of the primary rRNA binding proteins, it binds specifically to the 5'-end of 16S ribosomal RNA. The polypeptide is Small ribosomal subunit protein uS17 (Shewanella halifaxensis (strain HAW-EB4)).